Reading from the N-terminus, the 811-residue chain is Receptor-like protein 46 (811 aa).

The first 21 residues, 1 to 21 (MSKQCLLSCFLFFCFFIPQLS), serve as a signal peptide directing secretion. Over 22-782 (FSCPQDQRQS…EEEDKEEEET (761 aa)) the chain is Extracellular. N46, N71, N128, and N143 each carry an N-linked (GlcNAc...) asparagine glycan. LRR repeat units lie at residues 104-128 (INSLVGLDVSFNNIQGEIPGYAFVN), 129-153 (LTSLISLDMCCNRFNGSIPHELFSL), 155-177 (NLQRLDLSRNVIGGTLSGDIKEL), 178-201 (KNLQELILDENLIGGAIPSEIGSL), 203-225 (ELLTLTLRQNMFNSSIPSSVSRL), 226-249 (TKLKTIDLQNNFLSSKIPDDIGNL), 251-273 (NLSTLSLSMNKLSGGIPSSIHNL), 275-298 (NLETLQLENNNGLSGEIPAAWLFG), 299-322 (LQKLKVLRLEGNNKLQWNNNGYVF), 324-348 (QFKLTHLSLRSCGLEGNIPDWLKNQ), 349-369 (TALVYLDLSINRLEGRFPKWL), 370-395 (ADLKIRNITLSDNRLTGSLPPNLFQR), 397-419 (SLYYLVLSRNNFSGQIPDTIGES), 421-442 (VMVLMLSENNFSGSVPKSITKI), 443-466 (PFLKLLDLSKNRLSGEFPRFRPES), 468-488 (LEWLDISSNEFSGDVPAYFGG), 490-510 (TSMLLMSQNNFSGEFPQNFRN), 511-534 (LSYLIRLDLHDNKISGTVASLISQ), 536-560 (SSSVEVLSLRNNSLKGSIPEGISNL), 561-583 (TSLKVLDLSENNLDGYLPSSLGN), 643-665 (LYTLLDLSKNKLHGEIPTSLGNL), 666-688 (KSLKVLNLSNNEFSGLIPQSFGD), 690-713 (EKVESLDLSHNNLTGEIPKTLSKL), and 714-738 (SELNTLDLRNNKLKGRIPESPQLDR). The N-linked (GlcNAc...) asparagine glycan is linked to N215. N251 carries an N-linked (GlcNAc...) asparagine glycan. Residue N347 is glycosylated (N-linked (GlcNAc...) asparagine). 3 N-linked (GlcNAc...) asparagine glycosylation sites follow: N376, N407, and N430. N499 and N510 each carry an N-linked (GlcNAc...) asparagine glycan. N-linked (GlcNAc...) asparagine glycans are attached at residues N546, N559, and N583. 2 N-linked (GlcNAc...) asparagine glycosylation sites follow: N672 and N701. Residue N747 is glycosylated (N-linked (GlcNAc...) asparagine). Residues 783 to 803 (IFSWNAAAIGCSCGFLIAVVF) form a helical membrane-spanning segment. The Cytoplasmic portion of the chain corresponds to 804 to 811 (MSYNELWK).

Belongs to the RLP family.

Its subcellular location is the cell membrane. This chain is Receptor-like protein 46, found in Arabidopsis thaliana (Mouse-ear cress).